Here is a 204-residue protein sequence, read N- to C-terminus: Large ribosomal subunit protein uL4 (204 aa).

The interval 48–75 (HTKGRSDVSGGGKKPWRQKGRGGARAGS) is disordered.

This sequence belongs to the universal ribosomal protein uL4 family. In terms of assembly, part of the 50S ribosomal subunit.

Functionally, one of the primary rRNA binding proteins, this protein initially binds near the 5'-end of the 23S rRNA. It is important during the early stages of 50S assembly. It makes multiple contacts with different domains of the 23S rRNA in the assembled 50S subunit and ribosome. Forms part of the polypeptide exit tunnel. This Campylobacter fetus subsp. fetus (strain 82-40) protein is Large ribosomal subunit protein uL4.